Here is a 343-residue protein sequence, read N- to C-terminus: Diterpene cyclase DtcycB (343 aa).

Mg(2+)-binding residues include asparagine 219, serine 223, and glutamate 227.

This sequence belongs to the terpene synthase family. In terms of assembly, homodimer. Mg(2+) is required as a cofactor.

The catalysed reaction is (2E,6E,10E)-geranylgeranyl diphosphate + H2O = (R)-nephthenol + diphosphate. It catalyses the reaction (2E,6E,10E)-geranylgeranyl diphosphate = (R)-cembrene A + diphosphate. It carries out the reaction (2E,6E,10E)-geranylgeranyl diphosphate + H2O = (1S,4E,8E,12E)-2,2,5,9,13-pentamethylcyclopentadeca-4,8,12-trien-1-ol + diphosphate. Its function is as follows. Diterpene cyclases that can form multiple diterpene products. This is Diterpene cyclase DtcycB from Streptomyces sp.